The following is a 314-amino-acid chain: Deoxymugineic acid synthase 1-B (314 aa).

Residues 1 to 22 (MGAGDKTAAGMPRIGMGTAVQG) are disordered. NADP(+) is bound at residue Asp44. The active-site Proton donor is the Tyr49. His112 serves as a coordination point for substrate. NADP(+) contacts are provided by residues 158-159 (AN), Gln180, 258-266 (FDEARMREN), and 273-281 (ELTEEERRR).

The protein belongs to the aldo/keto reductase family. Mostly expressed in root tissues, observed in mesocotyl and embryonic roots, seedling roots, crown and seedling leafes, mature bracts, anthers, pistil, caryopsis and embryos.

It carries out the reaction 2'-deoxymugineate + NAD(+) = 3''-deamino-3''-oxonicotianamine + NADH + H(+). It catalyses the reaction 2'-deoxymugineate + NADP(+) = 3''-deamino-3''-oxonicotianamine + NADPH + H(+). It participates in siderophore biosynthesis. Its function is as follows. Catalyzes the reduction of a 3''-keto intermediate during the biosynthesis of 2'-deoxymugineic acid (DMA) from L-Met. Involved in the formation of phytosiderophores (MAs) belonging to the mugineic acid family and required to acquire iron. This is Deoxymugineic acid synthase 1-B from Triticum aestivum (Wheat).